Consider the following 400-residue polypeptide: Argininosuccinate synthase (400 aa).

8–16 (AYSGGLDTS) is a binding site for ATP. L-citrulline-binding residues include Tyr87 and Ser92. Gly117 serves as a coordination point for ATP. Thr119, Asn123, and Asp124 together coordinate L-aspartate. L-citrulline is bound at residue Asn123. Positions 127, 175, 259, and 271 each coordinate L-citrulline.

It belongs to the argininosuccinate synthase family. Type 1 subfamily. In terms of assembly, homotetramer.

The protein resides in the cytoplasm. The catalysed reaction is L-citrulline + L-aspartate + ATP = 2-(N(omega)-L-arginino)succinate + AMP + diphosphate + H(+). It functions in the pathway amino-acid biosynthesis; L-arginine biosynthesis; L-arginine from L-ornithine and carbamoyl phosphate: step 2/3. The sequence is that of Argininosuccinate synthase from Frankia casuarinae (strain DSM 45818 / CECT 9043 / HFP020203 / CcI3).